The primary structure comprises 437 residues: Probable N-acetylmuramidase (437 aa).

A signal peptide spans 1–57 (MPVSRVKVKNRHLKKKTKKPLAFYKPATKFAGAVLIAGTLTTTHELLLQQTSPMVQA). Disordered stretches follow at residues 217 to 244 (SSAGNTNSGGSTTTITNNNSGTNSSSTT), 290 to 320 (ASSTNSGGSNNSASTTPTTSVTPAKPTSQTT), and 367 to 392 (AASNPSTGSGSTATNNSNSTSSNSNA). The 44-residue stretch at 243-286 (TTYTVKSGDTLWGISQRYGISVAQIQSANNLKSTIIYIGQKLVL) folds into the LysM 1 domain. Low complexity predominate over residues 290 to 317 (ASSTNSGGSNNSASTTPTTSVTPAKPTS). Positions 319–362 (TTVKVKSGDTLWALSVKYKTSIAQLKSWNHLSSDTIYIGQNLIV) constitute a LysM 2 domain. One can recognise a LysM 3 domain in the interval 393 to 436 (SIHKVVKGDTLWGLSQKSGSPIASIKAWNHLSSDTILIGQYLRI).

Belongs to the glycosyl hydrolase 73 family.

The protein localises to the secreted. It catalyses the reaction Hydrolysis of (1-&gt;4)-beta-linkages between N-acetylmuramic acid and N-acetyl-D-glucosamine residues in a peptidoglycan and between N-acetyl-D-glucosamine residues in chitodextrins.. Its function is as follows. Hydrolyzes the cell wall of L.lactis and M.lysodeikticus. Required for cell separation during growth. This Lactococcus lactis subsp. cremoris (strain MG1363) protein is Probable N-acetylmuramidase (acmA).